Consider the following 388-residue polypeptide: Succinate--CoA ligase [ADP-forming] subunit beta (388 aa).

The ATP-grasp domain maps to 9 to 244 (KEILRKYNVP…LDEEDPAEIE (236 aa)). ATP contacts are provided by residues lysine 46, 53 to 55 (GRG), glutamate 99, alanine 102, and glutamate 107. Residues asparagine 199 and aspartate 213 each coordinate Mg(2+). Substrate is bound by residues asparagine 264 and 321 to 323 (GIM).

The protein belongs to the succinate/malate CoA ligase beta subunit family. As to quaternary structure, heterotetramer of two alpha and two beta subunits. Mg(2+) is required as a cofactor.

It catalyses the reaction succinate + ATP + CoA = succinyl-CoA + ADP + phosphate. The catalysed reaction is GTP + succinate + CoA = succinyl-CoA + GDP + phosphate. It participates in carbohydrate metabolism; tricarboxylic acid cycle; succinate from succinyl-CoA (ligase route): step 1/1. Its function is as follows. Succinyl-CoA synthetase functions in the citric acid cycle (TCA), coupling the hydrolysis of succinyl-CoA to the synthesis of either ATP or GTP and thus represents the only step of substrate-level phosphorylation in the TCA. The beta subunit provides nucleotide specificity of the enzyme and binds the substrate succinate, while the binding sites for coenzyme A and phosphate are found in the alpha subunit. The sequence is that of Succinate--CoA ligase [ADP-forming] subunit beta from Ralstonia pickettii (strain 12J).